The following is a 172-amino-acid chain: MDRAEKREFVSWLNGAFKESGSVVVAHYTGLTVAQMSDLRSKMRDAGGSVKVAKNRLAKIALQGTESEGISDLFTGQTVVAYANDPIAAPKVAVEFAKANDKLVILGGAMGATTLNADGVKSLASLPSLDELRAKLVGMIQTPAQRLAVLTSAPAGQIARVIGAHARKNEAA.

The protein belongs to the universal ribosomal protein uL10 family. Part of the ribosomal stalk of the 50S ribosomal subunit. The N-terminus interacts with L11 and the large rRNA to form the base of the stalk. The C-terminus forms an elongated spine to which L12 dimers bind in a sequential fashion forming a multimeric L10(L12)X complex.

Its function is as follows. Forms part of the ribosomal stalk, playing a central role in the interaction of the ribosome with GTP-bound translation factors. This is Large ribosomal subunit protein uL10 from Brucella anthropi (strain ATCC 49188 / DSM 6882 / CCUG 24695 / JCM 21032 / LMG 3331 / NBRC 15819 / NCTC 12168 / Alc 37) (Ochrobactrum anthropi).